A 192-amino-acid chain; its full sequence is Cytochrome c oxidase assembly protein CtaG (192 aa).

Residues 1 to 9 (MSLSPHQKT) are Cytoplasmic-facing. The chain crosses the membrane as a helical; Signal-anchor for type II membrane protein span at residues 10-30 (AGWLVGVVVVMGAASFAAVPF). Residues 31 to 192 (YDWFCRVTGF…AARPAGIDVN (162 aa)) are Periplasmic-facing.

This sequence belongs to the COX11/CtaG family.

It localises to the cell inner membrane. Functionally, exerts its effect at some terminal stage of cytochrome c oxidase synthesis, probably by being involved in the insertion of the copper B into subunit I. This is Cytochrome c oxidase assembly protein CtaG from Cereibacter sphaeroides (strain ATCC 17025 / ATH 2.4.3) (Rhodobacter sphaeroides).